The following is a 237-amino-acid chain: DNA repair protein RecO (237 aa).

Belongs to the RecO family.

In terms of biological role, involved in DNA repair and RecF pathway recombination. The protein is DNA repair protein RecO of Rickettsia felis (strain ATCC VR-1525 / URRWXCal2) (Rickettsia azadi).